Here is a 418-residue protein sequence, read N- to C-terminus: MDSLPDAILQYILSYLTSARDVAACNCVSKRWKESTDSVKSVVFHRNSFESIMETDDSDSIVRKMISSSRRLEELVVYSPFTSSGLASWMMHVSSSLRLLELRMDNLASEEVVVEGPLKLDCIGVAKNLEILKLWGVLMMSPPKWDMFPNLRSLEIVGAKMDDSSLSHALRACPNLSNLLLLACEGVKSISIDLPYLEHCKLDFYGQGNTLLVLTSQRLVSLDVQGCSWIRVPETKFLKNLSISSVTGRVYMVDFNNLSSLEALSIRGVQWCWDAICMILQQARDVKHLFMKVEFTGNEALQPFPEIDFVEFFNNHPKLQTFDIHGAMFAALCQKNSLKKLETGFTIPCLEEVVITVRSPLNAEQKMNTLESLVKYARGLKRMVIRILRMKSNHSSADDFCDDICKFRHMNEHLVHIE.

In terms of domain architecture, F-box spans 1-47 (MDSLPDAILQYILSYLTSARDVAACNCVSKRWKESTDSVKSVVFHRN).

In Arabidopsis thaliana (Mouse-ear cress), this protein is F-box protein At1g10780.